A 568-amino-acid polypeptide reads, in one-letter code: Putative DEAD-box RNA helicase HEL64 (568 aa).

The segment at 1-34 (MEETYSPFTGRQGQYNQGYNGGGRRDSRGGMGER) is disordered. Basic and acidic residues predominate over residues 23–34 (GRRDSRGGMGER). Residues 102 to 130 (FDHLCGIVPPYLLKKLTAQNFTAPTPVQA) carry the Q motif motif. In terms of domain architecture, Helicase ATP-binding spans 133–307 (WPVLLSGRDL…AEFQKQWIRI (175 aa)). 146 to 153 (AKTGSGKT) provides a ligand contact to ATP. The DEAD box signature appears at 255–258 (DEAD). Residues 335-483 (ELRKLMQEHR…EIPDWMIEWN (149 aa)) enclose the Helicase C-terminal domain.

This sequence belongs to the DEAD box helicase family. DDX5/DBP2 subfamily.

The protein localises to the nucleus. It carries out the reaction ATP + H2O = ADP + phosphate + H(+). In Trypanosoma brucei brucei, this protein is Putative DEAD-box RNA helicase HEL64 (HEL64).